Reading from the N-terminus, the 879-residue chain is Prostaglandin F2 receptor negative regulator (879 aa).

A signal peptide spans 1-21; sequence MGRPAPRPLLLALLSLAVCRG. Ig-like C2-type domains lie at 22–137 and 149–263; these read RVVR…DTVQ and PSSR…QEIQ. At 22–832 the chain is on the extracellular side; it reads RVVRVPAGTL…MDVLNAFKYP (811 aa). 2 disulfide bridges follow: Cys43/Cys119 and Cys169/Cys247. A glycan (N-linked (GlcNAc...) asparagine) is linked at Asn44. The Cell attachment site signature appears at 89–91; sequence RGD. Residue Thr271 is modified to Phosphothreonine. Ig-like C2-type domains follow at residues 276 to 389, 406 to 536, 544 to 662, and 688 to 813; these read PTAL…WHKV, PEYQ…DVFS, ASED…AWSP, and PTFN…AEIH. A disulfide bond links Cys299 and Cys373. Residues Asn300, Asn383, and Asn413 are each glycosylated (N-linked (GlcNAc...) asparagine). An Endoplasmic reticulum retention signal motif is present at residues 424–427; sequence PTEL. Cys429 and Cys515 are joined by a disulfide. Asn525, Asn600, Asn618, and Asn691 each carry an N-linked (GlcNAc...) asparagine glycan. An intrachain disulfide couples Cys571 to Cys655. The short motif at 703–705 is the Cell attachment site element; sequence RGD. A disulfide bridge links Cys711 with Cys793. Residues 833 to 853 traverse the membrane as a helical segment; that stretch reads LLIGVGLSTVIGLLSCLIGYC. Residues 854 to 879 lie on the Cytoplasmic side of the membrane; it reads SSHWCCKKEVRETRRERRRLMSMEMD.

In terms of assembly, interacts with CD9 and CD81. Part of a complex composed of CD9, CD81 and IGSF8. Also seems to interact with CD63, CD82 and CD151. As to expression, expressed in myoblasts (at protein level).

It is found in the endoplasmic reticulum membrane. The protein localises to the golgi apparatus. The protein resides in the trans-Golgi network membrane. Its function is as follows. Inhibits the binding of prostaglandin F2-alpha (PGF2-alpha) to its specific FP receptor, by decreasing the receptor number rather than the affinity constant. Functional coupling with the prostaglandin F2-alpha receptor seems to occur. In myoblasts, associates with tetraspanins CD9 and CD81 to prevent myotube fusion during muscle regeneration. This Mus musculus (Mouse) protein is Prostaglandin F2 receptor negative regulator (Ptgfrn).